The sequence spans 506 residues: Glutamate--tRNA ligase (506 aa).

Residues 24 to 34 (PSPTGLQHIGG) carry the 'HIGH' region motif. Zn(2+) is bound by residues C121, C123, C148, and H150. The short motif at 266–270 (KLSKR) is the 'KMSKS' region element. K269 is a binding site for ATP.

Belongs to the class-I aminoacyl-tRNA synthetase family. Glutamate--tRNA ligase type 1 subfamily. In terms of assembly, monomer. The cofactor is Zn(2+).

It is found in the cytoplasm. The catalysed reaction is tRNA(Glu) + L-glutamate + ATP = L-glutamyl-tRNA(Glu) + AMP + diphosphate. In terms of biological role, catalyzes the attachment of glutamate to tRNA(Glu) in a two-step reaction: glutamate is first activated by ATP to form Glu-AMP and then transferred to the acceptor end of tRNA(Glu). In Borrelia recurrentis (strain A1), this protein is Glutamate--tRNA ligase.